A 513-amino-acid chain; its full sequence is ATP synthase subunit alpha (513 aa).

169–176 (GDRQTGKT) lines the ATP pocket.

Belongs to the ATPase alpha/beta chains family. As to quaternary structure, F-type ATPases have 2 components, CF(1) - the catalytic core - and CF(0) - the membrane proton channel. CF(1) has five subunits: alpha(3), beta(3), gamma(1), delta(1), epsilon(1). CF(0) has three main subunits: a(1), b(2) and c(9-12). The alpha and beta chains form an alternating ring which encloses part of the gamma chain. CF(1) is attached to CF(0) by a central stalk formed by the gamma and epsilon chains, while a peripheral stalk is formed by the delta and b chains.

Its subcellular location is the cell inner membrane. It carries out the reaction ATP + H2O + 4 H(+)(in) = ADP + phosphate + 5 H(+)(out). In terms of biological role, produces ATP from ADP in the presence of a proton gradient across the membrane. The alpha chain is a regulatory subunit. The protein is ATP synthase subunit alpha of Bordetella avium (strain 197N).